The sequence spans 431 residues: DNA polymerase delta subunit 3 (431 aa).

Residues 64-80 (QGSDSGEDLYSVVLESR) are necessary for function, possibly resulting from its inability to interact with PolD2. The segment at 128–431 (PGAGKIVPSA…AGIMNFFSKK (304 aa)) is disordered. Low complexity predominate over residues 156 to 171 (SKSAVKLEPSKSSLKS). Composition is skewed to basic and acidic residues over residues 172 to 200 (EPAKSKAEKPVASKSSPEDKKTSPKEQAS) and 252 to 271 (SPPESEDKSKKDASNSNKKE). Positions 278 to 290 (PSPTKKPTTANTS) are enriched in low complexity. Over residues 294–307 (FDEESAESSDEEEK) the composition is skewed to acidic residues. 2 stretches are compositionally biased toward basic and acidic residues: residues 308–328 (LDMLRRKVIESDNDSDQEKAS) and 343–362 (QPPKKSADEETIALDEKMDT). Residues 387-411 (PANKKVSPKAAAPVNKKKSPPSAAK) are compositionally biased toward low complexity.

Component of both the DNA polymerase delta and DNA polymerase zeta complexes. The DNA polymerase delta complex consists of three subunits: the catalytic subunit PolD1 and two accessory subunits PolD2/Pol31 and PolD3/Pol32. Within the delta complex, interacts with both PolD1 and PolD2. Component of the DNA polymerase zeta complex consisting of four subunits: the catalytic subunit PolZ1 and three accessory subunits PolZ2/Rev7, PolD2/Pol31 and PolD3/Pol32. Expressed in ovaries (at the protein level). Expressed in ovaries.

The protein resides in the nucleus. Its subcellular location is the nucleoplasm. Accessory component of the DNA polymerase delta complex and possibly the DNA polymerase zeta complex. As a component of the delta complex, participates in high fidelity genome replication, including lagging strand synthesis, DNA recombination and repair. Required to recruit the DNA polymerase delta complex to the nucleus of rapidly dividing embryonic cells, and as a consequence is essential for genome replication during the earliest cell cycles. Increases the efficiency and processivity of DNA synthesis of the DNA polymerases during mitotic DNA replication and repair. During development this function is essential for preventing replication stress that results in the formation of chromosomal fragile sites (CFS) such as chromosomal breaks. Ensures genomic stability by promoting several types of DNA repair mechanisms including repairing broken dicentric chromosomes through homolog-dependent break-induced replication (BIR). During homologous recombination (HR) repair, required for maintaining the processivity of the delta complex during break-induced replication; a form of HR that requires extensive DNA synthesis such as the repair of large gaps. Able to suppress position effect variegation and may therefore have a role in the induction of chromatin state changes that likely include its activities in DNA replication and repair. This is DNA polymerase delta subunit 3 from Drosophila melanogaster (Fruit fly).